We begin with the raw amino-acid sequence, 358 residues long: Homoserine O-acetyltransferase (358 aa).

Residues 52 to 337 (NVILICHALT…DEPYGHDAFL (286 aa)) form the AB hydrolase-1 domain. The Nucleophile role is filled by serine 148. Arginine 217 serves as a coordination point for substrate. Catalysis depends on residues aspartate 304 and histidine 333. Aspartate 334 contributes to the substrate binding site.

Belongs to the AB hydrolase superfamily. MetX family. As to quaternary structure, homodimer.

It is found in the cytoplasm. The catalysed reaction is L-homoserine + acetyl-CoA = O-acetyl-L-homoserine + CoA. It functions in the pathway amino-acid biosynthesis; L-methionine biosynthesis via de novo pathway; O-acetyl-L-homoserine from L-homoserine: step 1/1. Its function is as follows. Transfers an acetyl group from acetyl-CoA to L-homoserine, forming acetyl-L-homoserine. The sequence is that of Homoserine O-acetyltransferase from Chlorobium luteolum (strain DSM 273 / BCRC 81028 / 2530) (Pelodictyon luteolum).